A 92-amino-acid chain; its full sequence is Alpha-conotoxin-like Rt20.2 (92 aa).

An N-terminal signal peptide occupies residues 1-24 (MPKLEMMLLVLLILPLSYFSAAGG). A propeptide spanning residues 25–45 (QVVQGDLHSDVLARYLQRGDR) is cleaved from the precursor. E49 is subject to 4-carboxyglutamate. Residue P55 is modified to 4-hydroxyproline. Intrachain disulfides connect C63/C72, C68/C80, C73/C90, and C78/C92.

It belongs to the conotoxin D superfamily. Hetero-, homo- or pseudo-homodimer (identical sequence, different post-translational modifications). In terms of tissue distribution, expressed by the venom duct.

Its subcellular location is the secreted. In terms of biological role, alpha-conotoxins act on postsynaptic membranes, they bind to the nicotinic acetylcholine receptors (nAChR) and thus inhibit them. Through its two C-terminal domains, this homodimeric protein would bind to two nAChR allosteric sites, located outside the nAChR C-loop of the principal binding face and at the adjacent binding interface in a clockwise direction. This toxin specifically blocks mammalian neuronal nAChR of the alpha-7/CHRNA7, alpha-3-beta-2/CHRNA3-CHRNB2 and alpha-4-beta-2/CHRNA4-CHRNB2 subtypes. The chain is Alpha-conotoxin-like Rt20.2 from Conus rattus (Rat cone).